The sequence spans 308 residues: Ribonuclease HIII (308 aa).

The RNase H type-2 domain maps to 88–304 (FHCIGSDEAG…RDKAIHLMNQ (217 aa)). A divalent metal cation contacts are provided by D94, E95, and D199.

It belongs to the RNase HII family. RnhC subfamily. It depends on Mn(2+) as a cofactor. The cofactor is Mg(2+).

It localises to the cytoplasm. The catalysed reaction is Endonucleolytic cleavage to 5'-phosphomonoester.. Functionally, endonuclease that specifically degrades the RNA of RNA-DNA hybrids. The polypeptide is Ribonuclease HIII (Staphylococcus epidermidis (strain ATCC 12228 / FDA PCI 1200)).